We begin with the raw amino-acid sequence, 335 residues long: Biotin synthase (335 aa).

One can recognise a Radical SAM core domain in the interval 46–274; it reads YKVQLASLFS…KSKIRLSAGR (229 aa). [4Fe-4S] cluster contacts are provided by C61, C65, and C68. Residues C105, C137, C197, and R269 each coordinate [2Fe-2S] cluster.

The protein belongs to the radical SAM superfamily. Biotin synthase family. In terms of assembly, homodimer. Requires [4Fe-4S] cluster as cofactor. The cofactor is [2Fe-2S] cluster.

It catalyses the reaction (4R,5S)-dethiobiotin + (sulfur carrier)-SH + 2 reduced [2Fe-2S]-[ferredoxin] + 2 S-adenosyl-L-methionine = (sulfur carrier)-H + biotin + 2 5'-deoxyadenosine + 2 L-methionine + 2 oxidized [2Fe-2S]-[ferredoxin]. Its pathway is cofactor biosynthesis; biotin biosynthesis; biotin from 7,8-diaminononanoate: step 2/2. Functionally, catalyzes the conversion of dethiobiotin (DTB) to biotin by the insertion of a sulfur atom into dethiobiotin via a radical-based mechanism. The protein is Biotin synthase of Prochlorococcus marinus subsp. pastoris (strain CCMP1986 / NIES-2087 / MED4).